A 201-amino-acid chain; its full sequence is uncharacterized protein (201 aa).

Interacts with the chaperones HSP82 and HSC82.

This is an uncharacterized protein from Saccharomyces cerevisiae (strain ATCC 204508 / S288c) (Baker's yeast).